The primary structure comprises 562 residues: MFS-type efflux pump elcC (562 aa).

The next 11 membrane-spanning stretches (helical) occupy residues 50–70, 80–100, 111–131, 139–159, 184–204, 215–235, 257–277, 288–308, 309–329, 351–371, and 383–403; these read WVFLIALALFEIGSLICGAAP, VVAGIGSGGLFAGAILLVAEF, GMLGAMYSVASVAGPLMGGAF, LCFYINLPLGVVTAVIVFLLV, LYGLVVLVPTIICILLATQWG, IIALFVVGFVLFVAFVVIEIW, IFSFCLFGSFLVVAYFLPLWF, SGIHNLPSILGTTIFSVAAGG, MVFGLGYYTWACILGSVLAAV, VLYGAGCGFGLNQPLIAIQAA, and VVIFMQTFGGTIAIAVAQNVF. N-linked (GlcNAc...) asparagine glycosylation is present at Asn448. A helical membrane pass occupies residues 455–475; it reads FYVAVATAGLSMAGSILIPWL. The tract at residues 515–562 is disordered; sequence EIASEDSQSSDIEKVPRNNEVSTYDSQTSEVEKSSVGSTNRKVESIRN. The span at 533 to 554 shows a compositional bias: polar residues; sequence NEVSTYDSQTSEVEKSSVGSTN.

It belongs to the major facilitator superfamily. TCR/Tet family.

It is found in the cell membrane. Functionally, MFS-type efflux pump; part of the gene cluster that mediates the biosynthesis of elsinochrome C, a perelyenequinone phytotoxin structurally similar to cercosporin. The sequence is that of MFS-type efflux pump elcC from Phaeosphaeria nodorum (strain SN15 / ATCC MYA-4574 / FGSC 10173) (Glume blotch fungus).